The following is a 468-amino-acid chain: Cyclin-dependent kinase 14 (468 aa).

Serine 24, serine 77, and serine 94 each carry phosphoserine. The segment at 102–131 (FKSSSAGKESPKVRRHSSPSSPTSPKFGKA) is disordered. A Phosphoserine modification is found at serine 133. Residues 134-418 (YEKLEKLGEG…AQAALSHEYF (285 aa)) enclose the Protein kinase domain. ATP-binding positions include 140-148 (LGEGSYATV) and lysine 163. Aspartate 255 acts as the Proton acceptor in catalysis. The disordered stretch occupies residues 448–468 (ESMRAFGKNSSYGKSLSNSKH). Over residues 455–468 (KNSSYGKSLSNSKH) the composition is skewed to polar residues.

It belongs to the protein kinase superfamily. CMGC Ser/Thr protein kinase family. CDC2/CDKX subfamily. Found in a complex with LRP6, CCNY and CAPRIN2 during G2/M stage; CAPRIN2 functions as a scaffold for the complex by binding to CCNY via its N terminus and to CDK14 via its C terminus. Interacts with CCNY; CCNY mediates its recruitment to the plasma membrane and promotes phosphorylation of LRP6. Interacts with CCDN3 and CDKN1A. Interacts with SEPT8. Interacts with 14-3-3 proteina YWHAB, YWHAE, YWHAH and YWHAQ.

Its subcellular location is the cell membrane. It localises to the cytoplasm. The protein localises to the nucleus. It carries out the reaction L-seryl-[protein] + ATP = O-phospho-L-seryl-[protein] + ADP + H(+). It catalyses the reaction L-threonyl-[protein] + ATP = O-phospho-L-threonyl-[protein] + ADP + H(+). With respect to regulation, serine/threonine-protein kinase activity is promoted by associated cyclins CCDN3 and CCNY and repressed by CDKN1A. In terms of biological role, serine/threonine-protein kinase involved in the control of the eukaryotic cell cycle, whose activity is controlled by an associated cyclin. Acts as a cell-cycle regulator of Wnt signaling pathway during G2/M phase by mediating the phosphorylation of LRP6 at 'Ser-1490', leading to the activation of the Wnt signaling pathway. Acts as a regulator of cell cycle progression and cell proliferation via its interaction with CCDN3. Phosphorylates RB1 in vitro, however the relevance of such result remains to be confirmed in vivo. May also play a role in meiosis, neuron differentiation and may indirectly act as a negative regulator of insulin-responsive glucose transport. The chain is Cyclin-dependent kinase 14 (CDK14) from Oryctolagus cuniculus (Rabbit).